Consider the following 192-residue polypeptide: 3-hydroxyanthranilate 3,4-dioxygenase 1 (192 aa).

Arginine 50 is an O2 binding site. Residues histidine 54, glutamate 60, and histidine 102 each contribute to the Fe cation site. Glutamate 60 lines the substrate pocket. Substrate-binding residues include arginine 106 and glutamate 116. Cysteine 131, cysteine 134, cysteine 168, and cysteine 171 together coordinate a divalent metal cation.

The protein belongs to the 3-HAO family. Fe(2+) serves as cofactor.

The protein resides in the cytoplasm. It carries out the reaction 3-hydroxyanthranilate + O2 = (2Z,4Z)-2-amino-3-carboxymuconate 6-semialdehyde. It participates in cofactor biosynthesis; NAD(+) biosynthesis; quinolinate from L-kynurenine: step 3/3. Functionally, catalyzes the oxidative ring opening of 3-hydroxyanthranilate to 2-amino-3-carboxymuconate semialdehyde, which spontaneously cyclizes to quinolinate. In Aspergillus fumigatus (strain CBS 144.89 / FGSC A1163 / CEA10) (Neosartorya fumigata), this protein is 3-hydroxyanthranilate 3,4-dioxygenase 1 (bna1-1).